Reading from the N-terminus, the 688-residue chain is DNA-directed RNA polymerase subunit beta' (688 aa).

Residues Cys-69, Cys-71, Cys-87, and Cys-90 each contribute to the Zn(2+) site. Residues Asp-497, Asp-499, and Asp-501 each contribute to the Mg(2+) site.

Belongs to the RNA polymerase beta' chain family. RpoC1 subfamily. As to quaternary structure, in plastids the minimal PEP RNA polymerase catalytic core is composed of four subunits: alpha, beta, beta', and beta''. When a (nuclear-encoded) sigma factor is associated with the core the holoenzyme is formed, which can initiate transcription. Mg(2+) serves as cofactor. Requires Zn(2+) as cofactor.

Its subcellular location is the plastid. The protein resides in the chloroplast. The enzyme catalyses RNA(n) + a ribonucleoside 5'-triphosphate = RNA(n+1) + diphosphate. Functionally, DNA-dependent RNA polymerase catalyzes the transcription of DNA into RNA using the four ribonucleoside triphosphates as substrates. The polypeptide is DNA-directed RNA polymerase subunit beta' (Sinapis alba (White mustard)).